The following is a 417-amino-acid chain: Tyrosine--tRNA ligase (417 aa).

Tyrosine 39 lines the L-tyrosine pocket. The 'HIGH' region signature appears at 44 to 53; the sequence is PTAPSLHAGG. Residues tyrosine 176 and glutamine 180 each contribute to the L-tyrosine site. A 'KMSKS' region motif is present at residues 236 to 240; it reads KMGKS. Residue lysine 239 participates in ATP binding. The S4 RNA-binding domain maps to 350-417; it reads IGVLALMVLA…KKRHVLIRPA (68 aa).

Belongs to the class-I aminoacyl-tRNA synthetase family. TyrS type 1 subfamily. As to quaternary structure, homodimer.

Its subcellular location is the cytoplasm. It carries out the reaction tRNA(Tyr) + L-tyrosine + ATP = L-tyrosyl-tRNA(Tyr) + AMP + diphosphate + H(+). Its function is as follows. Catalyzes the attachment of tyrosine to tRNA(Tyr) in a two-step reaction: tyrosine is first activated by ATP to form Tyr-AMP and then transferred to the acceptor end of tRNA(Tyr). The protein is Tyrosine--tRNA ligase of Brucella abortus (strain 2308).